We begin with the raw amino-acid sequence, 184 residues long: Acyl-homoserine-lactone synthase (184 aa).

This sequence belongs to the autoinducer synthase family.

It carries out the reaction a fatty acyl-[ACP] + S-adenosyl-L-methionine = an N-acyl-L-homoserine lactone + S-methyl-5'-thioadenosine + holo-[ACP] + H(+). In terms of biological role, involved in the synthesis of the acyl-homoserine lactone (AHL) signal N-(3-hydroxydodecanoyl)-L-HSL (3-hydroxy-C(12)-HSL or OH-dDHL). Required for normal biofilm development. The sequence is that of Acyl-homoserine-lactone synthase from Acinetobacter baumannii.